We begin with the raw amino-acid sequence, 24 residues long: Xenoposin precursor fragment B2 (24 aa).

As to expression, expressed by the skin glands.

It is found in the secreted. In terms of biological role, has antimicrobial activity against Gram-negative bacterium E.coli ATCC 25922 (MIC=100 uM), Gram-positive bacterium S.auerus ATCC 25923 (MIC=25 uM). This is Xenoposin precursor fragment B2 from Xenopus borealis (Kenyan clawed frog).